Consider the following 1186-residue polypeptide: MYND-type zinc finger-containing chromatin reader ZMYND8 (1186 aa).

The segment covering 1–12 (MDISTRSKDPGS) has biased composition (basic and acidic residues). Positions 1–57 (MDISTRSKDPGSAERTAQKRKFPSPPHSSNGHSPQDTSTSPIKKKKKPGLLNSNNKE) are disordered. The tract at residues 1 to 850 (MDISTRSKDP…QQQQQQQNQQ (850 aa)) is required for interaction with CCNT1. Serine 12 participates in a covalent cross-link: Glycyl lysine isopeptide (Lys-Gly) (interchain with G-Cter in SUMO2). Residue serine 24 is modified to Phosphoserine. Glycyl lysine isopeptide (Lys-Gly) (interchain with G-Cter in SUMO2) cross-links involve residues lysine 56 and lysine 70. The tract at residues 75-268 (TDPVDVVPQD…YLAACQKRDN (194 aa)) is interaction with histone H3K4me0. The tract at residues 75–406 (TDPVDVVPQD…VKLNFDMTAS (332 aa)) is interaction with histone H3K14ac. Residues 88-133 (DFYCWVCHREGQVLCCELCPRVYHAKCLRLTSEPEGDWFCPECEKI) form a PHD-type zinc finger. The segment at 88 to 327 (DFYCWVCHRE…INNCYLMSKE (240 aa)) is required for interaction with histone H3 and histone H4. The Zn(2+) site is built by cysteine 91, cysteine 94, cysteine 103, cysteine 106, histidine 111, cysteine 114, cysteine 127, and cysteine 130. The Bromo domain maps to 145 to 252 (AMTMLTIEQL…KICEHEMNEI (108 aa)). Zn(2+) contacts are provided by cysteine 255, cysteine 258, and cysteine 274. Residues 277-327 (PHPLVWAKLKGFPFWPAKALRDKDGQVDARFFGQHDRAWVPINNCYLMSKE) form the PWWP domain. A Glycyl lysine isopeptide (Lys-Gly) (interchain with G-Cter in SUMO2) cross-link involves residue lysine 390. At threonine 404 the chain carries Phosphothreonine. Phosphoserine is present on serine 406. Residues 412–512 (SKPVLSGGTG…TTKTDKTSTT (101 aa)) are disordered. The residue at position 413 (lysine 413) is an N6-acetyllysine; alternate. Lysine 413 participates in a covalent cross-link: Glycyl lysine isopeptide (Lys-Gly) (interchain with G-Cter in SUMO2); alternate. A phosphoserine mark is found at serine 417, serine 425, and serine 432. A compositionally biased stretch (polar residues) spans 433–442 (PMSTNSSVHT). Serine 444 is subject to Phosphoserine. Residue lysine 453 forms a Glycyl lysine isopeptide (Lys-Gly) (interchain with G-Cter in SUMO2) linkage. Phosphoserine occurs at positions 460, 462, 465, 486, 490, and 495. A compositionally biased stretch (polar residues) spans 472–489 (STASPASTKTGQAGSLSG). Lysine 505 participates in a covalent cross-link: Glycyl lysine isopeptide (Lys-Gly) (interchain with G-Cter in SUMO2). Phosphoserine is present on residues serine 514 and serine 523. Lysine 530 is covalently cross-linked (Glycyl lysine isopeptide (Lys-Gly) (interchain with G-Cter in SUMO2)). Threonine 541 is subject to Phosphothreonine. At serine 547 the chain carries Phosphoserine. A Glycyl lysine isopeptide (Lys-Gly) (interchain with G-Cter in SUMO2) cross-link involves residue lysine 549. At threonine 563 the chain carries Phosphothreonine. The interval 582-884 (TAVEHSDSED…ITQSPSTSTI (303 aa)) is disordered. 2 stretches are compositionally biased toward basic and acidic residues: residues 585-597 (EHSDSEDSEKSDS) and 606-631 (DEQKSKNEPEDTEDKEGCQMDKEPSA). Residues lysine 611 and lysine 645 each participate in a glycyl lysine isopeptide (Lys-Gly) (interchain with G-Cter in SUMO2) cross-link. Serine 652 and serine 655 each carry phosphoserine. A compositionally biased stretch (basic and acidic residues) spans 656-696 (EKADPGAVKDKASPEPEKDFSEKAKPSPHPIKDKLKGKDET). Lysine 657 participates in a covalent cross-link: Glycyl lysine isopeptide (Lys-Gly) (interchain with G-Cter in SUMO2). Phosphoserine is present on residues serine 668, serine 682, serine 707, serine 709, and serine 737. Over residues 718–738 (GEDHSGREGRKNKKEPKEPSP) the composition is skewed to basic and acidic residues. Residue threonine 746 is modified to Phosphothreonine. 2 positions are modified to phosphoserine: serine 754 and serine 756. Residues 766 to 799 (SSAQTSAAGATATTSTSSTVTVTAPAPAATGSPV) show a composition bias toward low complexity. Residues 818 to 832 (VWNSSSKFQTSSQKW) are compositionally biased toward polar residues. The span at 835-857 (QKMQRQQQQQQQQNQQQQPQSSQ) shows a compositional bias: low complexity. A compositionally biased stretch (polar residues) spans 873–884 (KEITQSPSTSTI). Residues 875-1047 (ITQSPSTSTI…YCCWNTSYCD (173 aa)) form a required for homodimerization region. The Zn(2+) site is built by cysteine 1028, cysteine 1031, cysteine 1039, cysteine 1040, cysteine 1046, cysteine 1050, histidine 1058, and cysteine 1062. The MYND-type zinc-finger motif lies at 1028 to 1062 (CANCKKEAIFYCCWNTSYCDYPCQQAHWPEHMKSC). Positions 1028–1062 (CANCKKEAIFYCCWNTSYCDYPCQQAHWPEHMKSC) are required for recruitment to DNA damage sites and for interaction with the NuRD complex, CHD4, HDAC1, HDAC2 and KDM1A. The tract at residues 1071-1186 (QEADAEVNTE…KESRLDTFWD (116 aa)) is disordered. A compositionally biased stretch (low complexity) spans 1085–1103 (SSQGSSSSTQSAPSETASA). The span at 1104-1116 (SKEKETSAEKSKE) shows a compositional bias: basic and acidic residues. Lysine 1115 is covalently cross-linked (Glycyl lysine isopeptide (Lys-Gly) (interchain with G-Cter in SUMO2)). Phosphoserine is present on serine 1119. Over residues 1121 to 1140 (LDLSGSRETPSSILLGSNQG) the composition is skewed to polar residues. Phosphoserine is present on serine 1141. Residues 1147–1186 (NKSSWSSSDEKRGSTRSDHNTSTSTKSLLPKESRLDTFWD) are interaction with PRKCB1. Basic and acidic residues-rich tracts occupy residues 1154–1165 (SDEKRGSTRSDH) and 1175–1186 (LPKESRLDTFWD).

Monomer and homodimer. Interacts with NuRD subcomplexes containing GATAD2A. Interacts with the histone deacetylase NuRD complex subunit CHD4; the interaction is direct, appears to occur with monomeric ZMYND8, and is increased following DNA damage. Interacts (via N-terminus) with the P-TEFb complex subunit CCNT1 (via central region); the interaction is direct and the association appears to occur between homodimeric ZMYND8 and the activated form of the P-TEFb complex. Interacts (via N-terminus) with DBN1 (via ADF-H domain); the interaction leads to sequestering of ZMYND8 in the cytoplasm. Interacts with the P-TEFb complex subunit CDK9; the association appears to occur between homodimeric ZMYND8 and the activated form of the P-TEFb complex. Interacts with EZH2; the interaction is dependent on the presence of chromatin. Interacts (via MYND domain) with the NuRD complex subunit GATAD2A. Interacts with histone H3 (via N-terminus) that is both methylated at 'Lys-4' (H3K4me1) and acetylated at 'Lys-14' (H3K14ac), with histone H3 (via N-terminus) unmodified at 'Lys-4' (H3K4me0) and acetylated at 'Lys-14' (H3K14ac), and with histone H3 (via N-terminus) di-methylated at 'Lys-36' (H3K36me2). Interacts (via Bromo domain) with histone H4 acetylated at 'Lys-16' (H4K16ac). Interacts with HDAC1. Interacts with HDAC2. Interacts with KDM1A. Interacts with KDM5C. Interacts with KDM5D. Interacts in vitro with PRKCB. Interacts with RNA polymerase II subunit POLR2A phosphorylated at 'Ser-5'. Interacts with ZNF592. Interacts with ZNF687. Does not interact with GATAD2B. In terms of tissue distribution, expressed in neurons (at protein level). Absent in astrocytes (at protein level). Expressed in all tissues examined with highest expression in brain, lung, pancreas, and placenta. Expressed in cutaneous T-cell lymphomas (CTCL).

It is found in the nucleus. The protein resides in the chromosome. It localises to the cytoplasm. Chromatin reader that recognizes dual histone modifications such as histone H3.1 dimethylated at 'Lys-36' and histone H4 acetylated at 'Lys-16' (H3.1K36me2-H4K16ac) and histone H3 methylated at 'Lys-4' and histone H4 acetylated at 'Lys-14' (H3K4me1-H3K14ac). May act as a transcriptional corepressor for KDM5D by recognizing the dual histone signature H3K4me1-H3K14ac. May also act as a transcriptional corepressor for KDM5C and EZH2. Recognizes acetylated histone H4 and recruits the NuRD chromatin remodeling complex to damaged chromatin for transcriptional repression and double-strand break repair by homologous recombination. Also activates transcription elongation by RNA polymerase II through recruiting the P-TEFb complex to target promoters. Localizes to H3.1K36me2-H4K16ac marks at all-trans-retinoic acid (ATRA)-responsive genes and positively regulates their expression. Promotes neuronal differentiation by associating with regulatory regions within the MAPT gene, to enhance transcription of a protein-coding MAPT isoform and suppress the non-coding MAPT213 isoform. Suppresses breast cancer, and prostate cancer cell invasion and metastasis. In Homo sapiens (Human), this protein is MYND-type zinc finger-containing chromatin reader ZMYND8 (ZMYND8).